The sequence spans 425 residues: Trigger factor (425 aa).

One can recognise a PPIase FKBP-type domain in the interval 163–248 (GDTAVIDFEG…VHEIKTKELP (86 aa)).

This sequence belongs to the FKBP-type PPIase family. Tig subfamily.

The protein localises to the cytoplasm. The enzyme catalyses [protein]-peptidylproline (omega=180) = [protein]-peptidylproline (omega=0). Its function is as follows. Involved in protein export. Acts as a chaperone by maintaining the newly synthesized protein in an open conformation. Functions as a peptidyl-prolyl cis-trans isomerase. This Bacillus cereus (strain Q1) protein is Trigger factor.